The primary structure comprises 686 residues: CAI-1 autoinducer sensor kinase/phosphatase CqsS (686 aa).

Helical transmembrane passes span 21–41 (LVGWMGMLGFPAYYFIWEYWF), 47–64 (NLGLRCAAAVLFGGLVFR), 77–97 (GYFLFTIGFCLPFFFAFMMLM), 100–120 (WSTIWAMSFMASIFLHILLVH), 124–144 (VMALQALFSVLVAYLAVYGLT), and 152–172 (IEWQYIPIFLFTYVFGNLCFF). Residues 191–416 (GIAHEMRNPL…EFVLSFPRYD (226 aa)) enclose the Histidine kinase domain. His194 carries the post-translational modification Phosphohistidine; by autocatalysis. Residues 569–686 (RILVVDDNQS…VLLNKVAAWV (118 aa)) enclose the Response regulatory domain. Asp618 carries the 4-aspartylphosphate modification.

The protein localises to the cell membrane. It carries out the reaction ATP + protein L-histidine = ADP + protein N-phospho-L-histidine.. Its function is as follows. Senses the quorum-sensing autoinducer CAI-1 ((S)-3-hydroxytridecan-4-one) which probably functions as an intragenus signal. The sensory signal is then relayed to LuxU and LuxO. This is CAI-1 autoinducer sensor kinase/phosphatase CqsS (cqsS) from Vibrio cholerae serotype O1 (strain ATCC 39315 / El Tor Inaba N16961).